We begin with the raw amino-acid sequence, 1174 residues long: Male determiner protein Mdmd(Y) (1174 aa).

The segment covering 1–15 (MNATDAESRKPENKP) has biased composition (basic and acidic residues). Disordered regions lie at residues 1–51 (MNAT…SGQR), 79–109 (RKDGSNEMLPKEDSINTNHNYTTDSDEHPVE), and 136–259 (KQLS…LRRS). The segment covering 16–35 (SSESSSSGSTSGSSDGEVSS) has biased composition (low complexity). The segment covering 36-47 (KTYFKNNKSKVL) has biased composition (polar residues). A compositionally biased stretch (basic and acidic residues) spans 79 to 92 (RKDGSNEMLPKEDS). The span at 138 to 153 (LSAYRSRSRSTRLSYS) shows a compositional bias: low complexity. Residues 167–180 (SRYKKSVLRNRRTS) are compositionally biased toward basic residues. Positions 183–200 (HGRDSSTTKRSVSRDKDN) are enriched in basic and acidic residues. Over residues 201–223 (RLRRRIGSSRSHTRSHSRFRRSE) the composition is skewed to basic residues. Residues 235–259 (RSQERRHERRRSMSSDYERIALRRS) show a composition bias toward basic and acidic residues. The region spanning 348-531 (KKYIHGYINK…KVLFQVRRDG (184 aa)) is the MIF4G domain. The span at 597-608 (DSDGSFGSGSNS) shows a compositional bias: low complexity. A disordered region spans residues 597–616 (DSDGSFGSGSNSETALSDCD). The 117-residue stretch at 641–757 (ALRRTIYLTL…SWDVLDCIKL (117 aa)) folds into the MI domain. Low complexity predominate over residues 840-857 (SAPSSSSSSSLSSELSAP). Disordered regions lie at residues 840–1045 (SAPS…SRTK) and 1089–1135 (KGGP…SREY). Composition is skewed to basic residues over residues 869-886 (KKKHKGKNKKMTKKKNPS) and 895-909 (IVGKNKIAAKNKTIK). Positions 910–924 (RRTDKDNSSSKDNFL) are enriched in basic and acidic residues. Positions 926–957 (SESSSNESISLDSLSSELFAPSSYSSSESSND) are enriched in low complexity. A compositionally biased stretch (basic residues) spans 963–1001 (KHKGKNKKMTKKKNPSNKREKTKKKLSKNKKAPNKNTKK). The segment covering 1010-1020 (SSESSISESKS) has biased composition (low complexity). Basic residues predominate over residues 1034 to 1045 (RKKRVTSKSRTK). Over residues 1089–1118 (KGGPNCRKDNYGNRQNHEISQRHDSEIKRR) the composition is skewed to basic and acidic residues. The span at 1119-1130 (REERKKRHHEKN) shows a compositional bias: basic residues.

The protein belongs to the CWC22 family. Component of the spliceosome C complex.

It is found in the nucleus speckle. Its function is as follows. Male determiner protein (M-factor) that controls male somatic sexual differentiation. Acts as a dominant factor that regulates the mRNA splicing of transformer (tra) and doublesex (dsx) transcripts and promotes expression of male splice forms of tra and dsx. Probably acts as a component of the spliceosome C complex required for mRNA splicing factor and exon-junction complex (EJC) assembly. Hinders eIF4AIII from non-specifically binding RNA and escorts it to the splicing machinery to promote EJC assembly on mature mRNAs. This is Male determiner protein Mdmd(Y) from Musca domestica (House fly).